A 453-amino-acid chain; its full sequence is Tubulin beta-2 chain (453 aa).

GTP-binding residues include glutamine 11, glutamate 71, serine 140, glycine 144, threonine 145, glycine 146, asparagine 206, and asparagine 228. Glutamate 71 contacts Mg(2+).

This sequence belongs to the tubulin family. Dimer of alpha and beta chains. A typical microtubule is a hollow water-filled tube with an outer diameter of 25 nm and an inner diameter of 15 nM. Alpha-beta heterodimers associate head-to-tail to form protofilaments running lengthwise along the microtubule wall with the beta-tubulin subunit facing the microtubule plus end conferring a structural polarity. Microtubules usually have 13 protofilaments but different protofilament numbers can be found in some organisms and specialized cells. Mg(2+) serves as cofactor.

The protein localises to the cytoplasm. Its subcellular location is the cytoskeleton. Functionally, tubulin is the major constituent of microtubules, a cylinder consisting of laterally associated linear protofilaments composed of alpha- and beta-tubulin heterodimers. Microtubules grow by the addition of GTP-tubulin dimers to the microtubule end, where a stabilizing cap forms. Below the cap, tubulin dimers are in GDP-bound state, owing to GTPase activity of alpha-tubulin. This is Tubulin beta-2 chain from Geotrichum candidum (Oospora lactis).